Here is a 427-residue protein sequence, read N- to C-terminus: Peptidase B (427 aa).

The Mn(2+) site is built by Lys195 and Asp200. Lys207 is a catalytic residue. Mn(2+) is bound by residues Asp218, Asp277, and Glu279. Arg281 is an active-site residue.

It belongs to the peptidase M17 family. In terms of assembly, homohexamer. Requires Mn(2+) as cofactor.

The protein localises to the cytoplasm. The catalysed reaction is Release of an N-terminal amino acid, Xaa, from a peptide or arylamide. Xaa is preferably Glu or Asp but may be other amino acids, including Leu, Met, His, Cys and Gln.. Functionally, probably plays an important role in intracellular peptide degradation. The sequence is that of Peptidase B from Shigella flexneri serotype 5b (strain 8401).